Here is a 282-residue protein sequence, read N- to C-terminus: Formate channel FocB (282 aa).

The Cytoplasmic segment spans residues 1 to 35; it reads MRNKLSFDLQLSARKAAIAERIAAHKIARSKVSVF. The chain crosses the membrane as a helical span at residues 36-56; it reads LMAMSAGVFMAIGFTFYLSVI. The Periplasmic portion of the chain corresponds to 57–68; that stretch reads ADAPSSQALTHL. Residues 69-89 form a helical membrane-spanning segment; that stretch reads VGGLCFTLGFILLAVCGTSLF. The Cytoplasmic segment spans residues 90–112; the sequence is TSSVMTVMAKSRGVISWRTWLIN. Residues 113 to 133 traverse the membrane as a helical segment; sequence ALLVACGNLAGIACFSLLIWF. Residues 134–163 are Periplasmic-facing; the sequence is SGLVMSENAMWGVAVLHCAEGKMHHTFTES. The helical transmembrane segment at 164–184 threads the bilayer; that stretch reads VSLGIMCNLMVCLALWMSYCG. Topologically, residues 185–190 are cytoplasmic; sequence RSLCDK. Residues 191 to 211 traverse the membrane as a helical segment; that stretch reads IVAMILPITLFVASGFEHCIA. The Periplasmic portion of the chain corresponds to 212-248; it reads NLFVIPFAIAIRHFAPPPFWQLAHSSADNFPALTVSH. Residues 249 to 269 traverse the membrane as a helical segment; that stretch reads FITANLLPVMLGNIIGGAVLV. At 270–282 the chain is on the cytoplasmic side; that stretch reads SMCYRAIYLRQEP.

This sequence belongs to the FNT transporter (TC 1.A.16) family.

The protein resides in the cell inner membrane. It catalyses the reaction formate(in) = formate(out). Its activity is regulated as follows. The direction of formate translocation depends on external pH and electron donor source. Its function is as follows. Involved in the bidirectional transport of formate during mixed-acid fermentation. The sequence is that of Formate channel FocB from Escherichia coli (strain K12).